The primary structure comprises 132 residues: Large ribosomal subunit protein uL14 (132 aa).

The protein belongs to the universal ribosomal protein uL14 family. In terms of assembly, part of the 50S ribosomal subunit. Forms a cluster with proteins L3 and L24e, part of which may contact the 16S rRNA in 2 intersubunit bridges.

Binds to 23S rRNA. Forms part of two intersubunit bridges in the 70S ribosome. The sequence is that of Large ribosomal subunit protein uL14 from Halorubrum lacusprofundi (strain ATCC 49239 / DSM 5036 / JCM 8891 / ACAM 34).